A 66-amino-acid polypeptide reads, in one-letter code: U1-theraphotoxin-Cg1b (66 aa).

A signal peptide spans 1-21 (MKTSALFVIFGLVLLFCNSFA). The propeptide occupies 22 to 29 (AELKTTGR). Disulfide bonds link Cys-31/Cys-46, Cys-38/Cys-51, and Cys-45/Cys-58.

The protein belongs to the neurotoxin 10 (Hwtx-1) family. 46 (Jztx-7/10/12) subfamily. In terms of tissue distribution, expressed by the venom gland.

The protein localises to the secreted. In terms of biological role, probable ion channel inhibitor. The protein is U1-theraphotoxin-Cg1b of Chilobrachys guangxiensis (Chinese earth tiger tarantula).